We begin with the raw amino-acid sequence, 313 residues long: Intelectin-like protein (313 aa).

Residues 33–251 form the Fibrinogen C-terminal domain; sequence TSCCSQTSPG…NNEKAPMALC (219 aa). Positions 86, 87, 89, 92, 97, 98, and 133 each coordinate Ca(2+). 3 disulfide bridges follow: C94/C280, C199/C259, and C251/C265. Residues N260, E262, E274, and D282 each coordinate Ca(2+). A carbohydrate-binding positions include 262-263 and E274; that span reads EH.

In terms of assembly, monomer, homodimer, homotrimer and homotetramer. Mostly monomeric or dimeric.

It is found in the secreted. In terms of biological role, binds mannan, mannose and, to a lesser degree, D-lactose, N-acetylgalactosamine, N-acetylglucosamine and beta-D-glucose. This is Intelectin-like protein from Alligator mississippiensis (American alligator).